The sequence spans 313 residues: 4-hydroxy-3-methylbut-2-enyl diphosphate reductase (313 aa).

C12 is a [4Fe-4S] cluster binding site. 2 residues coordinate (2E)-4-hydroxy-3-methylbut-2-enyl diphosphate: H41 and H74. Dimethylallyl diphosphate-binding residues include H41 and H74. Isopentenyl diphosphate is bound by residues H41 and H74. C96 provides a ligand contact to [4Fe-4S] cluster. H124 lines the (2E)-4-hydroxy-3-methylbut-2-enyl diphosphate pocket. H124 contacts dimethylallyl diphosphate. H124 lines the isopentenyl diphosphate pocket. E126 serves as the catalytic Proton donor. T167 is a (2E)-4-hydroxy-3-methylbut-2-enyl diphosphate binding site. Residue C197 participates in [4Fe-4S] cluster binding. S225, S226, N227, and S269 together coordinate (2E)-4-hydroxy-3-methylbut-2-enyl diphosphate. 4 residues coordinate dimethylallyl diphosphate: S225, S226, N227, and S269. Isopentenyl diphosphate-binding residues include S225, S226, N227, and S269.

It belongs to the IspH family. Homodimer. Requires [4Fe-4S] cluster as cofactor.

It catalyses the reaction isopentenyl diphosphate + 2 oxidized [2Fe-2S]-[ferredoxin] + H2O = (2E)-4-hydroxy-3-methylbut-2-enyl diphosphate + 2 reduced [2Fe-2S]-[ferredoxin] + 2 H(+). The catalysed reaction is dimethylallyl diphosphate + 2 oxidized [2Fe-2S]-[ferredoxin] + H2O = (2E)-4-hydroxy-3-methylbut-2-enyl diphosphate + 2 reduced [2Fe-2S]-[ferredoxin] + 2 H(+). It functions in the pathway isoprenoid biosynthesis; dimethylallyl diphosphate biosynthesis; dimethylallyl diphosphate from (2E)-4-hydroxy-3-methylbutenyl diphosphate: step 1/1. The protein operates within isoprenoid biosynthesis; isopentenyl diphosphate biosynthesis via DXP pathway; isopentenyl diphosphate from 1-deoxy-D-xylulose 5-phosphate: step 6/6. Catalyzes the conversion of 1-hydroxy-2-methyl-2-(E)-butenyl 4-diphosphate (HMBPP) into a mixture of isopentenyl diphosphate (IPP) and dimethylallyl diphosphate (DMAPP). Acts in the terminal step of the DOXP/MEP pathway for isoprenoid precursor biosynthesis. This Buchnera aphidicola subsp. Schizaphis graminum (strain Sg) protein is 4-hydroxy-3-methylbut-2-enyl diphosphate reductase.